A 119-amino-acid polypeptide reads, in one-letter code: Ribonuclease P protein component (119 aa).

Belongs to the RnpA family. In terms of assembly, consists of a catalytic RNA component (M1 or rnpB) and a protein subunit.

It carries out the reaction Endonucleolytic cleavage of RNA, removing 5'-extranucleotides from tRNA precursor.. Its function is as follows. RNaseP catalyzes the removal of the 5'-leader sequence from pre-tRNA to produce the mature 5'-terminus. It can also cleave other RNA substrates such as 4.5S RNA. The protein component plays an auxiliary but essential role in vivo by binding to the 5'-leader sequence and broadening the substrate specificity of the ribozyme. The sequence is that of Ribonuclease P protein component from Streptococcus pyogenes serotype M12 (strain MGAS2096).